Consider the following 499-residue polypeptide: Citrinin biosynthesis cluster MFS transporter mrr1 (499 aa).

The segment at 1–29 (MKEEIDAPVSTDASGTDLENARDQPSGEK) is disordered. The next 8 helical transmembrane spans lie at 58–78 (SLITCIFSTLTIWVTFSSSVF), 95–115 (VMTLGTSLTVLGFTVGPLVWG), 124–144 (LKPLYIGYAIFIIFQVPVAVA), 155–175 (FFLGFFGTSALAIIPGALADF), 187–207 (LFSAATFVGPIFGPIIGGFIV), 215–235 (WTAWITMIPASFFGIIAFLTL), 291–311 (ILVCMTIYISLIYGILYLFFV), and 327–347 (GIAALPFLGILVGVLMGCLLV). An N-linked (GlcNAc...) asparagine glycan is attached at Asn361. The next 4 membrane-spanning stretches (helical) occupy residues 370–390 (LPPMIVAAILLPIGLFWFGWT), 395–415 (ISWAPQAIAGAPIGMGILMIW), 443–463 (AVGAAFPLFATAMYHKLGVDW), and 467–487 (LLGFLSIAMIPIPVIFYFYGA).

The protein belongs to the major facilitator superfamily. CAR1 family.

The protein localises to the membrane. In terms of biological role, MFS transporter; part of the gene cluster that mediates the biosynthesis the mycotoxin citrinin, a hepato-nephrotoxic compound to humans due to inhibition of respiration complex III. The sequence is that of Citrinin biosynthesis cluster MFS transporter mrr1 from Monascus ruber (Mold).